Reading from the N-terminus, the 101-residue chain is Protein S100-A3 (101 aa).

Residue Ala-2 is modified to N-acetylalanine. EF-hand domains are found at residues 12-47 (IVCTFQEYAGRCGDKYKLCQAELKELLQKELATWTP) and 50-85 (FRECDYNKFMSVLDTNKDCEVDFVEYVRSLACLCLY). Lys-28 and Glu-33 together coordinate Ca(2+). An intrachain disulfide couples Cys-30 to Cys-68. Arg-51 is modified (citrulline; by PAD3). Residues Asp-63, Asn-65, Asp-67, Glu-69, and Glu-74 each contribute to the Ca(2+) site. Cysteines 81 and 99 form a disulfide. Zn(2+) is bound by residues Cys-83, Cys-86, His-87, and Cys-93.

The protein belongs to the S-100 family. As to quaternary structure, homodimer and homotetramer for the citrullinated form. In terms of processing, more than half of the arginine residues undergo citrullination by PAD1 and PAD2. Arg-51 is specifically citrullinated by PAD3 and promotes tetramerization. As to expression, skin specific, specifically expressed at the inner endocuticle of hair fibers.

Its subcellular location is the cytoplasm. Its function is as follows. Binds both calcium and zinc. May be involved in calcium-dependent cuticle cell differentiation, hair shaft and hair cuticular barrier formation. The sequence is that of Protein S100-A3 (S100A3) from Homo sapiens (Human).